The primary structure comprises 172 residues: Adenine phosphoribosyltransferase (172 aa).

It belongs to the purine/pyrimidine phosphoribosyltransferase family. As to quaternary structure, homodimer.

The protein resides in the cytoplasm. It catalyses the reaction AMP + diphosphate = 5-phospho-alpha-D-ribose 1-diphosphate + adenine. It functions in the pathway purine metabolism; AMP biosynthesis via salvage pathway; AMP from adenine: step 1/1. In terms of biological role, catalyzes a salvage reaction resulting in the formation of AMP, that is energically less costly than de novo synthesis. The protein is Adenine phosphoribosyltransferase of Parasynechococcus marenigrum (strain WH8102).